The chain runs to 389 residues: S-adenosylmethionine synthase (389 aa).

An ATP-binding site is contributed by H15. D17 provides a ligand contact to Mg(2+). E43 lines the K(+) pocket. Positions 56 and 99 each coordinate L-methionine. Residues 99 to 109 form a flexible loop region; sequence QSSDIQYSIDH. Residues 166–168, 232–233, D241, 247–248, S264, and K268 contribute to the ATP site; these read DAK, RF, and RK. Residue D241 coordinates L-methionine. K272 serves as a coordination point for L-methionine.

This sequence belongs to the AdoMet synthase family. As to quaternary structure, homotetramer; dimer of dimers. Mg(2+) serves as cofactor. K(+) is required as a cofactor.

The protein resides in the cytoplasm. The catalysed reaction is L-methionine + ATP + H2O = S-adenosyl-L-methionine + phosphate + diphosphate. It participates in amino-acid biosynthesis; S-adenosyl-L-methionine biosynthesis; S-adenosyl-L-methionine from L-methionine: step 1/1. Catalyzes the formation of S-adenosylmethionine (AdoMet) from methionine and ATP. The overall synthetic reaction is composed of two sequential steps, AdoMet formation and the subsequent tripolyphosphate hydrolysis which occurs prior to release of AdoMet from the enzyme. The protein is S-adenosylmethionine synthase of Blochmanniella pennsylvanica (strain BPEN).